The chain runs to 344 residues: Phenylalanine--tRNA ligase alpha subunit (344 aa).

Position 256 (E256) interacts with Mg(2+).

The protein belongs to the class-II aminoacyl-tRNA synthetase family. Phe-tRNA synthetase alpha subunit type 1 subfamily. As to quaternary structure, tetramer of two alpha and two beta subunits. It depends on Mg(2+) as a cofactor.

The protein resides in the cytoplasm. It catalyses the reaction tRNA(Phe) + L-phenylalanine + ATP = L-phenylalanyl-tRNA(Phe) + AMP + diphosphate + H(+). This chain is Phenylalanine--tRNA ligase alpha subunit, found in Bacillus cereus (strain G9842).